Here is a 366-residue protein sequence, read N- to C-terminus: UDP-N-acetylglucosamine--N-acetylmuramyl-(pentapeptide) pyrophosphoryl-undecaprenol N-acetylglucosamine transferase (366 aa).

UDP-N-acetyl-alpha-D-glucosamine-binding positions include 10–12, asparagine 124, serine 195, and glutamine 295; that span reads TGG.

It belongs to the glycosyltransferase 28 family. MurG subfamily.

Its subcellular location is the cell membrane. It catalyses the reaction di-trans,octa-cis-undecaprenyl diphospho-N-acetyl-alpha-D-muramoyl-L-alanyl-D-glutamyl-meso-2,6-diaminopimeloyl-D-alanyl-D-alanine + UDP-N-acetyl-alpha-D-glucosamine = di-trans,octa-cis-undecaprenyl diphospho-[N-acetyl-alpha-D-glucosaminyl-(1-&gt;4)]-N-acetyl-alpha-D-muramoyl-L-alanyl-D-glutamyl-meso-2,6-diaminopimeloyl-D-alanyl-D-alanine + UDP + H(+). It participates in cell wall biogenesis; peptidoglycan biosynthesis. In terms of biological role, cell wall formation. Catalyzes the transfer of a GlcNAc subunit on undecaprenyl-pyrophosphoryl-MurNAc-pentapeptide (lipid intermediate I) to form undecaprenyl-pyrophosphoryl-MurNAc-(pentapeptide)GlcNAc (lipid intermediate II). The polypeptide is UDP-N-acetylglucosamine--N-acetylmuramyl-(pentapeptide) pyrophosphoryl-undecaprenol N-acetylglucosamine transferase (Bacillus licheniformis (strain ATCC 14580 / DSM 13 / JCM 2505 / CCUG 7422 / NBRC 12200 / NCIMB 9375 / NCTC 10341 / NRRL NRS-1264 / Gibson 46)).